The primary structure comprises 94 residues: Co-chaperonin GroES (94 aa).

The protein belongs to the GroES chaperonin family. In terms of assembly, heptamer of 7 subunits arranged in a ring. Interacts with the chaperonin GroEL.

The protein resides in the cytoplasm. Its function is as follows. Together with the chaperonin GroEL, plays an essential role in assisting protein folding. The GroEL-GroES system forms a nano-cage that allows encapsulation of the non-native substrate proteins and provides a physical environment optimized to promote and accelerate protein folding. GroES binds to the apical surface of the GroEL ring, thereby capping the opening of the GroEL channel. The polypeptide is Co-chaperonin GroES (Bacillus licheniformis (strain ATCC 14580 / DSM 13 / JCM 2505 / CCUG 7422 / NBRC 12200 / NCIMB 9375 / NCTC 10341 / NRRL NRS-1264 / Gibson 46)).